The sequence spans 276 residues: Short-chain dehydrogenase anuF (276 aa).

NADP(+) is bound by residues I18, D68, K130, Y176, K180, V209, and T211. Catalysis depends on Y176, which acts as the Proton acceptor. The active-site Proton donor is Y176. K180 serves as the catalytic Lowers pKa of active site Tyr.

Belongs to the short-chain dehydrogenases/reductases (SDR) family.

It catalyses the reaction (2R,9S)-annullatin H + A = (2R)-annullatin F + AH2. Its function is as follows. Cytochrome P450 monooxygenase; part of the gene cluster that mediates the biosynthesis of annullatin D, an alkylated aromatic polyketide with a fused dihydrobenzofuran lactone ring system that exhibits potent agonistic activities toward the cannabinoid receptors. Within the pathway, anuF is involved in the formation of (2R)-annullatin F from the diastereomer of (2S,9S)-annullatin H (compound 12). The annullatin backbone 2-hydroxymethyl-3-pentylphenol is assembled from one acetyl-CoA starter unit and 5 malonyl-CoA elongation units by cooperation of the highly reducing polyketide synthase anuA, the short-chain dehydrogenase anuB and the oxidoreductase anuC, before being hydroxylated at the C-5 alkyl chain by the cytochrome P450 monooxygenase anuE to form (8S)-annullatin E. The prenyltransferase anuH subsequently installs one isoprenyl group at the benzene ring to form (8S)-annullatin J. Enzymatic or nonenzymatic dihydro-benzofuran ring formation between the prenyl and the phenolic hydroxyl groups in (8S)-annullatin J results in two diastereomers (2S,9S)-annullatin H and compound 12. The intermediate (2S,9S)-annullatin H is then converted to (2S,9S)-annullatin D by the FAD-linked oxidoreductase anuG-catalyzed five-member lactone ring formation. The isomer 12 acts as a substrate for the short-chain dehydrogenase anuF and is oxidized to (2R)-annullatin F, which is subsequently acetylated by an acetyltransferase leading to (2R)-annullatin G formation. The remaining enzymes identified within the cluster, anuD, anuI and anuJ, seem not to be involved in annullatin biosynthesis. This Penicillium roqueforti (strain FM164) protein is Short-chain dehydrogenase anuF.